A 225-amino-acid chain; its full sequence is Ribonuclease 3 (225 aa).

Residues 5–127 (LDRLQRSLGH…VFAATFLDQG (123 aa)) enclose the RNase III domain. Glutamate 40 is a binding site for Mg(2+). Aspartate 44 is a catalytic residue. The Mg(2+) site is built by aspartate 113 and glutamate 116. The active site involves glutamate 116. In terms of domain architecture, DRBM spans 154–224 (DPKTALQELL…AELALAQLRK (71 aa)).

It belongs to the ribonuclease III family. As to quaternary structure, homodimer. Mg(2+) is required as a cofactor.

It is found in the cytoplasm. The enzyme catalyses Endonucleolytic cleavage to 5'-phosphomonoester.. Functionally, digests double-stranded RNA. Involved in the processing of primary rRNA transcript to yield the immediate precursors to the large and small rRNAs (23S and 16S). Processes some mRNAs, and tRNAs when they are encoded in the rRNA operon. Processes pre-crRNA and tracrRNA of type II CRISPR loci if present in the organism. The chain is Ribonuclease 3 from Aromatoleum aromaticum (strain DSM 19018 / LMG 30748 / EbN1) (Azoarcus sp. (strain EbN1)).